Reading from the N-terminus, the 140-residue chain is Lymphocyte antigen 6H (140 aa).

A signal peptide spans 1–25 (MLPAAMKGLGLVLLAALLCSSPAHG). Residues 26-91 (LWCQDCTLTT…RHFFSDYLMG (66 aa)) enclose the UPAR/Ly6 domain. 5 cysteine pairs are disulfide-bonded: cysteine 28/cysteine 52, cysteine 31/cysteine 40, cysteine 45/cysteine 73, cysteine 77/cysteine 104, and cysteine 105/cysteine 110. Asparagine 36 carries N-linked (GlcNAc...) asparagine glycosylation.

It localises to the cell membrane. This is Lymphocyte antigen 6H (LY6H) from Bos taurus (Bovine).